The sequence spans 257 residues: Tryptophan synthase alpha chain (257 aa).

Residues glutamate 46 and aspartate 57 each act as proton acceptor in the active site.

The protein belongs to the TrpA family. In terms of assembly, tetramer of two alpha and two beta chains.

It catalyses the reaction (1S,2R)-1-C-(indol-3-yl)glycerol 3-phosphate + L-serine = D-glyceraldehyde 3-phosphate + L-tryptophan + H2O. Its pathway is amino-acid biosynthesis; L-tryptophan biosynthesis; L-tryptophan from chorismate: step 5/5. In terms of biological role, the alpha subunit is responsible for the aldol cleavage of indoleglycerol phosphate to indole and glyceraldehyde 3-phosphate. The polypeptide is Tryptophan synthase alpha chain (Parabacteroides distasonis (strain ATCC 8503 / DSM 20701 / CIP 104284 / JCM 5825 / NCTC 11152)).